The sequence spans 393 residues: ATP phosphoribosyltransferase regulatory subunit (393 aa).

The protein belongs to the class-II aminoacyl-tRNA synthetase family. HisZ subfamily. Heteromultimer composed of HisG and HisZ subunits.

It is found in the cytoplasm. Its pathway is amino-acid biosynthesis; L-histidine biosynthesis; L-histidine from 5-phospho-alpha-D-ribose 1-diphosphate: step 1/9. Functionally, required for the first step of histidine biosynthesis. May allow the feedback regulation of ATP phosphoribosyltransferase activity by histidine. The polypeptide is ATP phosphoribosyltransferase regulatory subunit (Nitrosospira multiformis (strain ATCC 25196 / NCIMB 11849 / C 71)).